A 567-amino-acid chain; its full sequence is Periplasmic [NiFe] hydrogenase large subunit (567 aa).

Glu-62 serves as a coordination point for Mg(2+). Ni(2+) contacts are provided by Cys-81 and Cys-84. Residue Cys-84 participates in Fe cation binding. Leu-498 is a binding site for Mg(2+). Cys-546 and Cys-549 together coordinate Ni(2+). Cys-549 contacts Fe cation. His-552 is a binding site for Mg(2+). Positions 553–567 (VIDGHTNEVHKFRIL) are excised as a propeptide.

The protein belongs to the [NiFe]/[NiFeSe] hydrogenase large subunit family. Heterodimer of a large and a small subunit. Requires Ni(2+) as cofactor. Fe cation is required as a cofactor.

The protein localises to the periplasm. It catalyses the reaction 2 Fe(III)-[cytochrome c3] + H2 = 2 Fe(II)-[cytochrome c3] + 2 H(+). Its function is as follows. Catalyzes the reversible oxidoreduction of molecular hydrogen, in conjunction with a specific electron acceptor, cytochrome c3. This is Periplasmic [NiFe] hydrogenase large subunit (hydB) from Nitratidesulfovibrio vulgaris (strain DSM 19637 / Miyazaki F) (Desulfovibrio vulgaris).